Reading from the N-terminus, the 384-residue chain is Histone acetyltransferase type B subunit 2 (384 aa).

WD repeat units lie at residues 156–196 (GHSA…SSIS), 203–243 (RHET…CIHA), 247–287 (AHTS…QPLH), 291–331 (GHSK…AEVP), and 348–384 (GHTSTVCDISWNPAEPFEIASVSEDNILQIWQMPQPE).

This sequence belongs to the WD repeat RBAP46/RBAP48/MSI1 family. In terms of assembly, component of the HAT-B complex.

Its subcellular location is the cytoplasm. It is found in the nucleus. Regulatory subunit of the histone acetylase B (HAT-B) complex. The complex acetylates histone H4 which is required for telomeric silencing. The protein is Histone acetyltransferase type B subunit 2 (HAT2) of Encephalitozoon cuniculi (strain GB-M1) (Microsporidian parasite).